The chain runs to 403 residues: MVAQNNQQNKDETKGIKSYYCSKIEELEIKVNEKAQDLRRLEAQRNELNNRVRMLKEELQLLTNPGSHVAEVVKLMGKNKVLVKVNPEGKFVVDIDPTVDIAKLTPSTRAALKHESYTLHRILPNKIDPLVSLMKVEKIPDSTYDMVGGLDKQIKEIKEVIELPIKHPELFESLGIAQPKGVLLYGPPGTGKTLLARAVAHHTDCTFIRVSGSELVQKYIGEGSRMVRELFIMAREHAPSIIFMDEIDSIGSSRGESGSGGGDSEVQRTMLELLNQLDGFESTKNIKVLMCTNRIDILDPALLRPGRIDRKIEFPNPGDAGRLDILKIHSRKMNLTRGINLKKISDKMNGASGAELKAVCTEAGMYALRERRVHVSQEDFEMAVSKVMKKDSEQNMSINKLWK.

186–193 (GPPGTGKT) is a binding site for ATP.

The protein belongs to the AAA ATPase family.

Its subcellular location is the cytoplasm. It localises to the nucleus. Its function is as follows. The 26S proteasome is involved in the ATP-dependent degradation of ubiquitinated proteins. The regulatory (or ATPase) complex confers ATP dependency and substrate specificity to the 26S complex. This is 26S proteasome regulatory subunit 8 (psmC5) from Dictyostelium discoideum (Social amoeba).